The primary structure comprises 523 residues: Probable glucose-1-phosphate adenylyltransferase large subunit, chloroplastic (523 aa).

It belongs to the bacterial/plant glucose-1-phosphate adenylyltransferase family. As to quaternary structure, heterotetramer.

The protein localises to the plastid. It is found in the chloroplast. The enzyme catalyses alpha-D-glucose 1-phosphate + ATP + H(+) = ADP-alpha-D-glucose + diphosphate. The protein operates within glycan biosynthesis; starch biosynthesis. Its activity is regulated as follows. Activated by 3'phosphoglycerate, inhibited by orthophosphate. Allosteric regulation. Its function is as follows. This protein plays a role in synthesis of starch. It catalyzes the synthesis of the activated glycosyl donor, ADP-glucose from Glc-1-P and ATP. This chain is Probable glucose-1-phosphate adenylyltransferase large subunit, chloroplastic, found in Arabidopsis thaliana (Mouse-ear cress).